The primary structure comprises 254 residues: 3-deoxy-manno-octulosonate cytidylyltransferase (254 aa).

This sequence belongs to the KdsB family.

It localises to the cytoplasm. It catalyses the reaction 3-deoxy-alpha-D-manno-oct-2-ulosonate + CTP = CMP-3-deoxy-beta-D-manno-octulosonate + diphosphate. It participates in nucleotide-sugar biosynthesis; CMP-3-deoxy-D-manno-octulosonate biosynthesis; CMP-3-deoxy-D-manno-octulosonate from 3-deoxy-D-manno-octulosonate and CTP: step 1/1. It functions in the pathway bacterial outer membrane biogenesis; lipopolysaccharide biosynthesis. Its function is as follows. Activates KDO (a required 8-carbon sugar) for incorporation into bacterial lipopolysaccharide in Gram-negative bacteria. This Pseudomonas putida (strain W619) protein is 3-deoxy-manno-octulosonate cytidylyltransferase.